A 235-amino-acid polypeptide reads, in one-letter code: Protein LIFEGUARD 1 (235 aa).

7 helical membrane-spanning segments follow: residues 33–53 (YSIL…VYFV), 67–87 (LAVF…LLAF), 95–115 (CIVL…CCSL), 120–140 (IVLE…IYTF), 149–169 (FSFL…FTLL), 178–198 (LSSM…IIFD), and 212–232 (ITAA…LLGI).

The protein belongs to the BI1 family. In terms of tissue distribution, expressed at very low in leaves.

The protein resides in the membrane. Functionally, (Microbial infection) Facilitates the development of the powdery mildew fungus E.cruciferarum. In terms of biological role, (Microbial infection) May prevent cell death upon A.alternata f.sp. lycopersici (AAL) toxin treatment. The protein is Protein LIFEGUARD 1 of Arabidopsis thaliana (Mouse-ear cress).